A 344-amino-acid polypeptide reads, in one-letter code: L-rhamnose-proton symporter (344 aa).

Transmembrane regions (helical) follow at residues 4-24 (AITMGIFWHLIGAASAACFYA), 38-58 (WSVGGIVSWIILPWAISALLL), 68-88 (FSLSTLLPVFLFGAMWGIGNI), 101-121 (MGIGIAIGITLIVGTLMTPII), 137-157 (TLLGVLVALIGVGIVTRAGQL), 175-195 (LVLAVMCGIFSAGMSFAMNAA), 214-234 (LPSYVVIMGGGAIINLGFCFI), 259-279 (VLLSALGGLMWYLQFFFYAWG), 290-310 (ISWMLHMSFYVLCGGIVGLVL), and 323-343 (VLSLGCVVIIVAANIVGMGMA).

It belongs to the L-rhamnose transporter (TC 2.A.7.6) family.

It localises to the cell inner membrane. It catalyses the reaction L-rhamnopyranose(in) + H(+)(in) = L-rhamnopyranose(out) + H(+)(out). Its function is as follows. Uptake of L-rhamnose across the cytoplasmic membrane with the concomitant transport of protons into the cell (symport system). The sequence is that of L-rhamnose-proton symporter from Escherichia coli O157:H7.